The sequence spans 677 residues: Regulator of G-protein signaling 9 (677 aa).

One can recognise a DEP domain in the interval 30 to 105; that stretch reads PETGVRMQNQ…PDSSLYRFQT (76 aa). The region spanning 219-280 is the G protein gamma domain; it reads VTAVRKEIMY…ITDDTQFWDL (62 aa). Positions 295-416 constitute an RGS domain; it reads RWAFNFSELI…SPIYKEMLAK (122 aa). Disordered regions lie at residues 530 to 571 and 639 to 677; these read SSGL…RAPL and DSGP…GKAG.

In terms of assembly, heterodimer with GNB5. Interacts with RGS7BP, leading to regulate the subcellular location of the heterodimer formed with GNB5. Component of the RGS9-1-Gbeta5 complex composed of RGS9 (RGS9-1), Gbeta5 (GNB5) and RGS9BP. Interacts with PDE6G and GNAT1. In terms of tissue distribution, expressed in the central nervous system. Isoform RGS9L is found in striatum, hypothalamus and nucleus accumbens while isoform RGS9S is expressed in retina and pineal gland.

Its subcellular location is the membrane. Its function is as follows. Inhibits signal transduction by increasing the GTPase activity of G protein alpha subunits thereby driving them into their inactive GDP-bound form. Binds to GNAT1. Involved in phototransduction; key element in the recovery phase of visual transduction. The sequence is that of Regulator of G-protein signaling 9 (Rgs9) from Rattus norvegicus (Rat).